The chain runs to 454 residues: Apyrase (454 aa).

Topologically, residues 1-7 are cytoplasmic; it reads MLNQNSH. Residues 8 to 28 traverse the membrane as a helical; Signal-anchor for type II membrane protein segment; sequence FIFIILAIFLVLPLSLLSKNV. Residues 29–454 are Extracellular-facing; it reads NAQIPLRRHL…TTNKIRVASS (426 aa). Residue 48 to 58 participates in ATP binding; sequence VIFDAGSTGSR. An N-linked (GlcNAc...) asparagine glycan is attached at asparagine 151. The active-site Proton acceptor is glutamate 170. 194–204 is an ATP binding site; the sequence is ATIDLGGGSVQ. The N-linked (GlcNAc...) asparagine glycan is linked to asparagine 262.

This sequence belongs to the GDA1/CD39 NTPase family. Ca(2+) serves as cofactor. The N-terminus is blocked.

It localises to the membrane. The enzyme catalyses a ribonucleoside 5'-triphosphate + 2 H2O = a ribonucleoside 5'-phosphate + 2 phosphate + 2 H(+). In terms of biological role, catalyzes the hydrolysis of phosphoanhydride bonds of nucleoside tri- and di-phosphates. This Solanum tuberosum (Potato) protein is Apyrase (RROP1).